Reading from the N-terminus, the 413-residue chain is Low-salt glycan biosynthesis hexosyltransferase Agl6 (413 aa).

Residues 1–27 form a disordered region; it reads MSTRSQSESPVDAPQQGATNGQSASDI. Over residues 16–25 the composition is skewed to polar residues; it reads QGATNGQSAS. Helical transmembrane passes span 270 to 290, 304 to 324, 355 to 375, and 389 to 409; these read LFSA…VLAW, TGIG…FGAF, IGSV…FTWV, and VVAT…FLLG.

Belongs to the glycosyltransferase 2 family.

Its subcellular location is the membrane. The protein operates within protein modification; protein glycosylation. Its pathway is cell surface structure biogenesis; S-layer biogenesis. Functionally, hexosyltransferase involved in N-glycan biosynthetic pathway that takes place under low-salt conditions (1.75 M instead of 3.4 M). Participates in the formation of the tetrasaccharide present at 'Asn-532' of S-layer glycoprotein Csg, consisting of a sulfated hexose, 2 hexoses and rhamnose. Together with Agl5, mediates the addition of sugars 1 and 2 to dolichol phosphate in the tetrasaccharide. This chain is Low-salt glycan biosynthesis hexosyltransferase Agl6 (agl6), found in Haloferax volcanii (strain ATCC 29605 / DSM 3757 / JCM 8879 / NBRC 14742 / NCIMB 2012 / VKM B-1768 / DS2) (Halobacterium volcanii).